The sequence spans 169 residues: Biogenesis of lysosome-related organelles complex 1 subunit 4 (169 aa).

Belongs to the BLOC1S4 family. In terms of assembly, component of the biogenesis of lysosome-related organelles complex-1 (BLOC-1) composed of Blos1, Blos2, Blos3, Blos4, Dysb, Muted, Pldn and Snapin. Interacts with Pldn.

Functionally, component of the biogenesis of lysosome-related organelles complex-1 (BLOC-1) involved in pigment granule biogenesis. This Drosophila melanogaster (Fruit fly) protein is Biogenesis of lysosome-related organelles complex 1 subunit 4.